A 336-amino-acid polypeptide reads, in one-letter code: MLIAQRPTLSEEVVSENRSRFIIEPLEPGFGYTLGNSLRRTLLSSIPGAAVTSIRIDGVLHEFTTVPGVKEDVTEIILNIKNLSVSSEHDEPVVAYLRKQGPGVVTAADIAPPAGVEFHNPDLHIATLNSKGKFELELTIERGRGYVSAAQNKSGDSEIGRIPVDSIYSPVMKVTFRVEATRVEQRTDFDKLIVDVETKQAIAPRDAVASAGTTLVELFGLARELNTAAEGIEIGPSPTDAALAADMALPIEDLDLTVRSYNCLKREGIHTVGELVARSEADLMDIRNFGAKSIDEVKAKLVELGLSLKDSPPGFDLAARAAAIEEDDAAFSDDEL.

Positions 1–226 (MLIAQRPTLS…ELFGLARELN (226 aa)) are alpha N-terminal domain (alpha-NTD). An alpha C-terminal domain (alpha-CTD) region spans residues 241-336 (AALAADMALP…DDAAFSDDEL (96 aa)).

The protein belongs to the RNA polymerase alpha chain family. In terms of assembly, homodimer. The RNAP catalytic core consists of 2 alpha, 1 beta, 1 beta' and 1 omega subunit. When a sigma factor is associated with the core the holoenzyme is formed, which can initiate transcription.

The catalysed reaction is RNA(n) + a ribonucleoside 5'-triphosphate = RNA(n+1) + diphosphate. In terms of biological role, DNA-dependent RNA polymerase catalyzes the transcription of DNA into RNA using the four ribonucleoside triphosphates as substrates. The chain is DNA-directed RNA polymerase subunit alpha from Paenarthrobacter aurescens (strain TC1).